The following is a 271-amino-acid chain: MARINRISITLCALLFTTLPLTPMAHASKQARESSATTHITKKADKKKSTATTKKTQKTAKKAASKSTTKSKTASSVKKSSITASKNAKTRSKHAVNKTASASFTEKCTKRKGYKSHCVKVKNAASGTLADAHKAKVQKATKVAMNKLMQQIGKPYRWGGSSPRTGFDCSGLVYYAYKDLVKIRIPRTANEMYHLRDAAPIERSELKNGDLVFFRTQGRGTADHVGVYVGNGKFIQSPRTGQEIQITSLSEDYWQRHYVGARRVMTPKTLR.

The first 27 residues, 1–27 (MARINRISITLCALLFTTLPLTPMAHA), serve as a signal peptide directing secretion. The tract at residues 27 to 102 (ASKQARESSA…KHAVNKTASA (76 aa)) is disordered. Residues 55 to 64 (KTQKTAKKAA) are compositionally biased toward basic residues. The segment covering 65–86 (SKSTTKSKTASSVKKSSITASK) has biased composition (low complexity). One can recognise a NlpC/P60 domain in the interval 138–265 (QKATKVAMNK…RHYVGARRVM (128 aa)). The Nucleophile role is filled by cysteine 169. Histidine 224 (proton acceptor) is an active-site residue. Glutamine 236 is a catalytic residue.

This sequence belongs to the peptidase C40 family.

The protein operates within cell wall biogenesis; cell wall polysaccharide biosynthesis. In terms of biological role, a murein DD-endopeptidase with specificity for D-Ala-meso-diaminopimelic acid (mDAP) cross-links. Its role is probably to cleave D-Ala-mDAP cross-links to allow insertion of new glycans and thus cell wall expansion. Functionally redundant with MepM and MepH. Partially suppresses an mepS disruption mutant. This chain is Murein DD-endopeptidase MepH (mepH), found in Escherichia coli (strain K12).